A 199-amino-acid polypeptide reads, in one-letter code: 7-methyl-GTP pyrophosphatase (199 aa).

Catalysis depends on aspartate 73, which acts as the Proton acceptor.

Belongs to the Maf family. YceF subfamily. The cofactor is a divalent metal cation.

It is found in the cytoplasm. It carries out the reaction N(7)-methyl-GTP + H2O = N(7)-methyl-GMP + diphosphate + H(+). Its function is as follows. Nucleoside triphosphate pyrophosphatase that hydrolyzes 7-methyl-GTP (m(7)GTP). May have a dual role in cell division arrest and in preventing the incorporation of modified nucleotides into cellular nucleic acids. This chain is 7-methyl-GTP pyrophosphatase, found in Bordetella pertussis (strain Tohama I / ATCC BAA-589 / NCTC 13251).